A 238-amino-acid chain; its full sequence is Riboflavin synthase (238 aa).

2 Lumazine-binding repeats span residues 1 to 103 (MFTG…FGGH) and 104 to 205 (YVQG…EKQI). 2,4-dihydroxypteridine is bound by residues 4 to 6 (GIV), 54 to 56 (CLT), and 68 to 73 (GISPET). Phosphoserine is present on Ser-95. Residues 107 to 109 (GHV), Lys-143, 152 to 154 (SLT), and 170 to 175 (SMIKHT) each bind 2,4-dihydroxypteridine.

As to quaternary structure, homotrimer.

It carries out the reaction 2 6,7-dimethyl-8-(1-D-ribityl)lumazine + H(+) = 5-amino-6-(D-ribitylamino)uracil + riboflavin. Its pathway is cofactor biosynthesis; riboflavin biosynthesis; riboflavin from 2-hydroxy-3-oxobutyl phosphate and 5-amino-6-(D-ribitylamino)uracil: step 2/2. Catalyzes the dismutation of two molecules of 6,7-dimethyl-8-ribityllumazine, resulting in the formation of riboflavin and 5-amino-6-(D-ribitylamino)uracil. In Saccharomyces cerevisiae (strain ATCC 204508 / S288c) (Baker's yeast), this protein is Riboflavin synthase.